The primary structure comprises 384 residues: Conidiophore development protein hymA (384 aa).

Positions 362-374 (EPIEPSRSAREPS) are enriched in basic and acidic residues. The tract at residues 362–384 (EPIEPSRSAREPSRSTANTTTVA) is disordered.

Belongs to the Mo25 family.

It localises to the cytoplasm. Required for conidiophore development. This is Conidiophore development protein hymA (hymA) from Emericella nidulans (strain FGSC A4 / ATCC 38163 / CBS 112.46 / NRRL 194 / M139) (Aspergillus nidulans).